Consider the following 436-residue polypeptide: Trigger factor (436 aa).

The PPIase FKBP-type domain maps to 161 to 255; it reads DDVAIIDFKT…VKEVREKQLP (95 aa).

The protein belongs to the FKBP-type PPIase family. Tig subfamily.

It is found in the cytoplasm. The catalysed reaction is [protein]-peptidylproline (omega=180) = [protein]-peptidylproline (omega=0). Functionally, involved in protein export. Acts as a chaperone by maintaining the newly synthesized protein in an open conformation. Functions as a peptidyl-prolyl cis-trans isomerase. The protein is Trigger factor of Akkermansia muciniphila (strain ATCC BAA-835 / DSM 22959 / JCM 33894 / BCRC 81048 / CCUG 64013 / CIP 107961 / Muc).